A 226-amino-acid polypeptide reads, in one-letter code: Urease accessory protein UreF (226 aa).

This sequence belongs to the UreF family. In terms of assembly, ureD, UreF and UreG form a complex that acts as a GTP-hydrolysis-dependent molecular chaperone, activating the urease apoprotein by helping to assemble the nickel containing metallocenter of UreC. The UreE protein probably delivers the nickel.

The protein localises to the cytoplasm. Required for maturation of urease via the functional incorporation of the urease nickel metallocenter. In Corynebacterium glutamicum (strain R), this protein is Urease accessory protein UreF.